A 353-amino-acid polypeptide reads, in one-letter code: Ferredoxin--NADP reductase 1 (353 aa).

FAD is bound by residues Asp-43, Gln-51, Tyr-56, Ala-96, Phe-135, Asp-300, and Ser-341.

It belongs to the ferredoxin--NADP reductase type 2 family. As to quaternary structure, homodimer. The cofactor is FAD.

It carries out the reaction 2 reduced [2Fe-2S]-[ferredoxin] + NADP(+) + H(+) = 2 oxidized [2Fe-2S]-[ferredoxin] + NADPH. This Cupriavidus metallidurans (strain ATCC 43123 / DSM 2839 / NBRC 102507 / CH34) (Ralstonia metallidurans) protein is Ferredoxin--NADP reductase 1.